Here is a 207-residue protein sequence, read N- to C-terminus: Large ribosomal subunit protein uL4 (207 aa).

The interval 50–75 is disordered; the sequence is KTKTVSEVSGTTKKPFKQKGTGNARQ.

The protein belongs to the universal ribosomal protein uL4 family. As to quaternary structure, part of the 50S ribosomal subunit.

Functionally, one of the primary rRNA binding proteins, this protein initially binds near the 5'-end of the 23S rRNA. It is important during the early stages of 50S assembly. It makes multiple contacts with different domains of the 23S rRNA in the assembled 50S subunit and ribosome. Its function is as follows. Forms part of the polypeptide exit tunnel. The polypeptide is Large ribosomal subunit protein uL4 (Rickettsia akari (strain Hartford)).